The primary structure comprises 369 residues: Core histone macro-H2A.1 (369 aa).

The Histone H2A domain occupies 2 to 117; sequence SSRGGKKKST…NIHPELLAKK (116 aa). An N6-lactoyllysine; alternate mark is found at lysine 7 and lysine 9. The residue at position 18 (lysine 18) is an N6-methyllysine. Residue lysine 116 is modified to N6-acetyllysine; alternate. A Glycyl lysine isopeptide (Lys-Gly) (interchain with G-Cter in ubiquitin); alternate cross-link involves residue lysine 116. Lysine 117 participates in a covalent cross-link: Glycyl lysine isopeptide (Lys-Gly) (interchain with G-Cter in ubiquitin). Residue lysine 123 is modified to N6-acetyllysine; alternate. Lysine 123 is modified (N6,N6-dimethyllysine; alternate). Lysine 123 participates in a covalent cross-link: Glycyl lysine isopeptide (Lys-Gly) (interchain with G-Cter in SUMO2); alternate. Residues 128-180 are disordered; sequence ITPPPAKKAKSPSQKKPVAKKTGGKKGARKSKKKQGEVSKAASADSTTEGTPT. Threonine 129 is subject to Phosphothreonine. The span at 144 to 160 shows a compositional bias: basic residues; that stretch reads PVAKKTGGKKGARKSKK. Lysine 167 participates in a covalent cross-link: Glycyl lysine isopeptide (Lys-Gly) (interchain with G-Cter in SUMO2). 2 positions are modified to phosphoserine: serine 170 and serine 173. Threonine 178 bears the Phosphothreonine mark. A Macro domain is found at 184-367; sequence TVLSTKSLFL…IYVQEMAKLD (184 aa). Lysine 189 is covalently cross-linked (Glycyl lysine isopeptide (Lys-Gly) (interchain with G-Cter in SUMO2)). A glycoprotein is bound by residues aspartate 203, isoleucine 204, valine 226, serine 275, glycine 312, serine 313, glycine 314, and asparagine 316. Lysine 320 participates in a covalent cross-link: Glycyl lysine isopeptide (Lys-Gly) (interchain with G-Cter in SUMO2).

The protein belongs to the histone H2A family. As to quaternary structure, the nucleosome is a histone octamer containing two molecules each of H2A, H2B, H3 and H4 assembled in one H3-H4 heterotetramer and two H2A-H2B heterodimers. Interacts with HDAC1 and HDAC2. Interacts with SPOP. Part of a complex consisting of MACROH2A1, CUL3 and SPOP. In terms of assembly, interacts with PARP1. Post-translationally, monoubiquitinated at either Lys-116 or Lys-117. May also be polyubiquitinated. Ubiquitination is mediated by the CUL3/SPOP E3 complex and does not promote proteasomal degradation. Instead, it is required for enrichment in inactive X chromosome chromatin. Widely expressed, with high levels in testis. Present in liver, kidney and adrenal gland (at protein level). In the liver, present in hepatocytes and at a lesser extent in cells of the bile ducts. In the kidney, expressed in proximal and distal convoluted tubules and in straight proximal tubules. In the adrenal gland, present in inner cells of the cortex and medulla.

The protein localises to the nucleus. It localises to the chromosome. In terms of biological role, variant histone H2A which replaces conventional H2A in a subset of nucleosomes where it represses transcription. Nucleosomes wrap and compact DNA into chromatin, limiting DNA accessibility to the cellular machineries which require DNA as a template. Histones thereby play a central role in transcription regulation, DNA repair, DNA replication and chromosomal stability. DNA accessibility is regulated via a complex set of post-translational modifications of histones, also called histone code, and nucleosome remodeling. Involved in stable X chromosome inactivation. Inhibits the binding of transcription factors, including NF-kappa-B, and interferes with the activity of remodeling SWI/SNF complexes. Inhibits histone acetylation by EP300 and recruits class I HDACs, which induces a hypoacetylated state of chromatin. Isoform that specifically binds poly-ADP-ribose and O-acetyl-ADP-ribose and plays a key role in NAD(+) metabolism. Able to bind to the ends of poly-ADP-ribose chains created by PARP1 and cap them. This prevents PARP1 from further addition of ADP-ribose and thus limits the consumption of nuclear NAD(+), allowing the cell to maintain proper NAD(+) levels in both the nucleus and the mitochondria to promote proper mitochondrial respiration. Increases the expression of genes involved in redox metabolism, including SOD3. Its function is as follows. In contrast to isoform 1, does not bind poly-ADP-ribose. Represses SOD3 gene expression. The protein is Core histone macro-H2A.1 of Mus musculus (Mouse).